A 1064-amino-acid chain; its full sequence is WD repeat-containing protein on Y chromosome (1064 aa).

WD repeat units follow at residues 153–197 (EEVT…IRTA), 326–365 (RVPL…EPSA), 369–408 (GHNG…LLQT), 459–498 (THAA…RKII), 511–550 (IIDI…VVRN), 598–638 (FHTD…RRYS), 746–785 (KTGD…EAEK), and 827–866 (AHLK…LGTL). Residues 914–924 (PAKRAEVKAPE) are compositionally biased toward basic and acidic residues. Disordered stretches follow at residues 914-935 (PAKR…QTDD) and 1023-1064 (GSAL…QQSE). Residues 925–935 (DRDEETAQTDD) show a composition bias toward acidic residues.

The sequence is that of WD repeat-containing protein on Y chromosome from Drosophila pseudoobscura pseudoobscura (Fruit fly).